A 394-amino-acid chain; its full sequence is Ribulose bisphosphate carboxylase large chain (394 aa).

N6,N6,N6-trimethyllysine is present on K5. Substrate-binding residues include N114 and T164. K166 serves as the catalytic Proton acceptor. K168 is a binding site for substrate. Mg(2+)-binding residues include K192, D194, and E195. N6-carboxylysine is present on K192. The active-site Proton acceptor is H285. Residues R286, H318, and S370 each contribute to the substrate site.

Belongs to the RuBisCO large chain family. Type I subfamily. As to quaternary structure, heterohexadecamer of 8 large chains and 8 small chains. Requires Mg(2+) as cofactor.

It localises to the plastid. The protein resides in the chloroplast. The catalysed reaction is 2 (2R)-3-phosphoglycerate + 2 H(+) = D-ribulose 1,5-bisphosphate + CO2 + H2O. It carries out the reaction D-ribulose 1,5-bisphosphate + O2 = 2-phosphoglycolate + (2R)-3-phosphoglycerate + 2 H(+). RuBisCO catalyzes two reactions: the carboxylation of D-ribulose 1,5-bisphosphate, the primary event in carbon dioxide fixation, as well as the oxidative fragmentation of the pentose substrate in the photorespiration process. Both reactions occur simultaneously and in competition at the same active site. This is Ribulose bisphosphate carboxylase large chain (rbcL) from Cabomba caroliniana (Carolina fanwort).